We begin with the raw amino-acid sequence, 303 residues long: Ribosomal protein L11 methyltransferase (303 aa).

Positions 152, 173, 195, and 239 each coordinate S-adenosyl-L-methionine.

This sequence belongs to the methyltransferase superfamily. PrmA family.

The protein resides in the cytoplasm. It carries out the reaction L-lysyl-[protein] + 3 S-adenosyl-L-methionine = N(6),N(6),N(6)-trimethyl-L-lysyl-[protein] + 3 S-adenosyl-L-homocysteine + 3 H(+). Its function is as follows. Methylates ribosomal protein L11. This Desulforapulum autotrophicum (strain ATCC 43914 / DSM 3382 / VKM B-1955 / HRM2) (Desulfobacterium autotrophicum) protein is Ribosomal protein L11 methyltransferase.